The chain runs to 229 residues: Tubulin-specific chaperone B (229 aa).

Positions 170-212 constitute a CAP-Gly domain; that stretch reads GATKFKEGVWVGVKYDEPVGKNDGSVAGVRYFDCDPKYGGFVR.

This sequence belongs to the TBCB family. As to quaternary structure, supercomplex made of cofactors A to E. Cofactors A and D function by capturing and stabilizing tubulin in a quasi-native conformation. Cofactor E binds to the cofactor D-tubulin complex; interaction with cofactor C then causes the release of tubulin polypeptides that are committed to the native state.

It localises to the cytoplasm. The protein localises to the cytoskeleton. Functionally, binds to alpha-tubulin folding intermediates after their interaction with cytosolic chaperonin in the pathway leading from newly synthesized tubulin to properly folded heterodimer. This chain is Tubulin-specific chaperone B, found in Caenorhabditis elegans.